A 156-amino-acid chain; its full sequence is MSSNKINKKSIARIAAVQAIYQNILQNNDDMDDIMQNVLSFYQNNNSITDLPENLKISLSISHFKMLVKSVFENINKLDEIIDNHLTNDKDPAHMPILLRALLRVSICELLFCPTTPAKVVINEYTDIANDMLNEHEIGFVNSVLDKIAKEHTRLI.

It belongs to the NusB family.

Involved in transcription antitermination. Required for transcription of ribosomal RNA (rRNA) genes. Binds specifically to the boxA antiterminator sequence of the ribosomal RNA (rrn) operons. In Rickettsia massiliae (strain Mtu5), this protein is Transcription antitermination protein NusB.